A 184-amino-acid polypeptide reads, in one-letter code: dCTP deaminase (184 aa).

DCTP contacts are provided by residues 97–102 (RSTFAR) and D113. E123 acts as the Proton donor/acceptor in catalysis. Positions 155 and 162 each coordinate dCTP.

It belongs to the dCTP deaminase family. In terms of assembly, homotrimer.

The enzyme catalyses dCTP + H2O + H(+) = dUTP + NH4(+). It functions in the pathway pyrimidine metabolism; dUMP biosynthesis; dUMP from dCTP (dUTP route): step 1/2. Functionally, catalyzes the deamination of dCTP to dUTP. In Saccharolobus solfataricus (strain ATCC 35092 / DSM 1617 / JCM 11322 / P2) (Sulfolobus solfataricus), this protein is dCTP deaminase.